We begin with the raw amino-acid sequence, 624 residues long: tRNA uridine 5-carboxymethylaminomethyl modification enzyme MnmG (624 aa).

FAD is bound by residues 13-18 (GGGHAG), Val125, and Ser180. 273–287 (GPRYCPSIEDKIVRF) contacts NAD(+). Gln370 provides a ligand contact to FAD.

Belongs to the MnmG family. As to quaternary structure, homodimer. Heterotetramer of two MnmE and two MnmG subunits. The cofactor is FAD.

The protein resides in the cytoplasm. NAD-binding protein involved in the addition of a carboxymethylaminomethyl (cmnm) group at the wobble position (U34) of certain tRNAs, forming tRNA-cmnm(5)s(2)U34. This chain is tRNA uridine 5-carboxymethylaminomethyl modification enzyme MnmG, found in Legionella pneumophila (strain Paris).